We begin with the raw amino-acid sequence, 254 residues long: Mediator of RNA polymerase II transcription subunit 6 (254 aa).

The segment at 190 to 254 (PTFYQTKPGE…PPPEKRARVQ (65 aa)) is disordered. Residues 227-245 (PPAPPAPPRPPPQTTPNKP) are compositionally biased toward pro residues.

The protein belongs to the Mediator complex subunit 6 family. As to quaternary structure, component of the Mediator complex.

Its subcellular location is the nucleus. In terms of biological role, component of the Mediator complex, a coactivator involved in the regulated transcription of nearly all RNA polymerase II-dependent genes. Mediator functions as a bridge to convey information from gene-specific regulatory proteins to the basal RNA polymerase II transcription machinery. Mediator is recruited to promoters by direct interactions with regulatory proteins and serves as a scaffold for the assembly of a functional preinitiation complex with RNA polymerase II and the general transcription factors. The chain is Mediator of RNA polymerase II transcription subunit 6 (med6) from Danio rerio (Zebrafish).